The chain runs to 529 residues: Calcium/calmodulin-dependent protein kinase type II subunit gamma (529 aa).

In terms of domain architecture, Protein kinase spans 14–272; it reads YQLFEELGKG…ADQALKHPWV (259 aa). Residues 20 to 28 and K43 each bind ATP; that span reads LGKGAFSVV. The active-site Proton acceptor is D136. The tract at residues 283–292 is autoinhibitory domain; sequence HRQETVECLR. Residues T287, T306, and T307 each carry the phosphothreonine; by autocatalysis modification. The calmodulin-binding stretch occupies residues 294–316; the sequence is FNARRKLKGAILTTMLVSRNFSA. A phosphoserine mark is found at S311, S334, S349, S352, and S455. Positions 324-353 are disordered; the sequence is KSDGGVKKRKSSSSVHLMPQSNNKNSLVSP. Residues 342-352 are compositionally biased toward polar residues; the sequence is PQSNNKNSLVS.

It belongs to the protein kinase superfamily. CAMK Ser/Thr protein kinase family. CaMK subfamily. CAMK2 is composed of 4 different chains: alpha (CAMK2A), beta (CAMK2B), gamma (CAMK2G), and delta (CAMK2D). The different isoforms assemble into homo- or heteromultimeric holoenzymes composed of 12 subunits with two hexameric rings stacked one on top of the other. In terms of processing, autophosphorylation of Thr-287 following activation by Ca(2+)/calmodulin. Phosphorylation of Thr-287 locks the kinase into an activated state.

It localises to the sarcoplasmic reticulum membrane. It catalyses the reaction L-seryl-[protein] + ATP = O-phospho-L-seryl-[protein] + ADP + H(+). The enzyme catalyses L-threonyl-[protein] + ATP = O-phospho-L-threonyl-[protein] + ADP + H(+). Activated by Ca(2+)/calmodulin. Binding of calmodulin results in conformational change that relieves intrasteric autoinhibition and allows autophosphorylation of Thr-287 which turns the kinase in a constitutively active form and confers to the kinase a Ca(2+)-independent activity. Calcium/calmodulin-dependent protein kinase that functions autonomously after Ca(2+)/calmodulin-binding and autophosphorylation, and is involved in sarcoplasmic reticulum Ca(2+) transport in skeletal muscle and may function in dendritic spine and synapse formation and neuronal plasticity. In slow-twitch muscles, is involved in regulation of sarcoplasmic reticulum (SR) Ca(2+) transport and in fast-twitch muscle participates in the control of Ca(2+) release from the SR through phosphorylation of the ryanodine receptor-coupling factor triadin. In the central nervous system, it is involved in the regulation of neurite formation and arborization. It may participate in the promotion of dendritic spine and synapse formation and maintenance of synaptic plasticity which enables long-term potentiation (LTP) and hippocampus-dependent learning. In response to interferon-gamma (IFN-gamma) stimulation, catalyzes phosphorylation of STAT1, stimulating the JAK-STAT signaling pathway. The polypeptide is Calcium/calmodulin-dependent protein kinase type II subunit gamma (Camk2g) (Mus musculus (Mouse)).